A 511-amino-acid chain; its full sequence is Phospho-2-dehydro-3-deoxyheptonate aldolase 2, chloroplastic (511 aa).

The protein belongs to the class-II DAHP synthase family. In terms of tissue distribution, leaves, stems, tuber and roots.

The protein resides in the plastid. It localises to the chloroplast. It carries out the reaction D-erythrose 4-phosphate + phosphoenolpyruvate + H2O = 7-phospho-2-dehydro-3-deoxy-D-arabino-heptonate + phosphate. It functions in the pathway metabolic intermediate biosynthesis; chorismate biosynthesis; chorismate from D-erythrose 4-phosphate and phosphoenolpyruvate: step 1/7. The chain is Phospho-2-dehydro-3-deoxyheptonate aldolase 2, chloroplastic (SHKB) from Solanum tuberosum (Potato).